We begin with the raw amino-acid sequence, 309 residues long: Ribosomal RNA small subunit methyltransferase H (309 aa).

Residues 33 to 35, D53, F79, D100, and Q107 each bind S-adenosyl-L-methionine; that span reads GGH.

The protein belongs to the methyltransferase superfamily. RsmH family.

The protein resides in the cytoplasm. It catalyses the reaction cytidine(1402) in 16S rRNA + S-adenosyl-L-methionine = N(4)-methylcytidine(1402) in 16S rRNA + S-adenosyl-L-homocysteine + H(+). Specifically methylates the N4 position of cytidine in position 1402 (C1402) of 16S rRNA. The polypeptide is Ribosomal RNA small subunit methyltransferase H (Clostridium botulinum (strain ATCC 19397 / Type A)).